The following is a 192-amino-acid chain: Peptidyl-tRNA hydrolase (192 aa).

Y17 serves as a coordination point for tRNA. The active-site Proton acceptor is the H22. TRNA is bound by residues Y68, N70, and N116.

This sequence belongs to the PTH family. As to quaternary structure, monomer.

The protein resides in the cytoplasm. It carries out the reaction an N-acyl-L-alpha-aminoacyl-tRNA + H2O = an N-acyl-L-amino acid + a tRNA + H(+). In terms of biological role, hydrolyzes ribosome-free peptidyl-tRNAs (with 1 or more amino acids incorporated), which drop off the ribosome during protein synthesis, or as a result of ribosome stalling. Functionally, catalyzes the release of premature peptidyl moieties from peptidyl-tRNA molecules trapped in stalled 50S ribosomal subunits, and thus maintains levels of free tRNAs and 50S ribosomes. This is Peptidyl-tRNA hydrolase from Mycolicibacterium vanbaalenii (strain DSM 7251 / JCM 13017 / BCRC 16820 / KCTC 9966 / NRRL B-24157 / PYR-1) (Mycobacterium vanbaalenii).